The chain runs to 276 residues: Rhomboid protease GlpG (276 aa).

6 helical membrane-spanning segments follow: residues 94–114 (GPFTWAILLICIAVFILQNLL), 142–162 (AFMHFSLMHILFNLLWWWYLG), 169–189 (IGSGKLVVITVISALLSGFVQ), 192–212 (FSGPWFGGLSGVVYALMGYVW), 229–249 (LILFSLVWLIAGWFDVFGMAI), and 252–272 (GAHVAGLATGLAMAFVDTLHG). Ser201 (nucleophile) is an active-site residue. Residue His254 is part of the active site.

It belongs to the peptidase S54 family.

The protein localises to the cell inner membrane. The enzyme catalyses Cleaves type-1 transmembrane domains using a catalytic dyad composed of serine and histidine that are contributed by different transmembrane domains.. In terms of biological role, rhomboid-type serine protease that catalyzes intramembrane proteolysis. The chain is Rhomboid protease GlpG from Klebsiella pneumoniae (strain 342).